A 220-amino-acid chain; its full sequence is Flavin-dependent thymidylate synthase (220 aa).

Residues 1–208 (MKIDILDKGF…PWTFEAFLKY (208 aa)) enclose the ThyX domain. FAD contacts are provided by residues Thr55, 78 to 81 (RHRI), and Glu86. DUMP contacts are provided by residues 75–78 (QWFR), 86–90 (ELSGR), and Arg147. The short motif at 78–88 (RHRIASYNELS) is the ThyX motif element. Residues 163–165 (NAR) and Asn169 each bind FAD. Arg174 is a binding site for dUMP. Catalysis depends on Arg174, which acts as the Involved in ionization of N3 of dUMP, leading to its activation.

It belongs to the thymidylate synthase ThyX family. Homotetramer. Requires FAD as cofactor.

The catalysed reaction is dUMP + (6R)-5,10-methylene-5,6,7,8-tetrahydrofolate + NADPH + H(+) = dTMP + (6S)-5,6,7,8-tetrahydrofolate + NADP(+). It carries out the reaction dUMP + formaldehyde + NADPH + H(+) = dTMP + NADP(+) + H2O. It functions in the pathway pyrimidine metabolism; dTTP biosynthesis. Catalyzes the reductive methylation of 2'-deoxyuridine-5'-monophosphate (dUMP or deoxyuridylate) to 2'-deoxythymidine-5'-monophosphate (dTMP or deoxythymidylate) while utilizing 5,10-methylenetetrahydrofolate (mTHF) as the methylene donor, and NAD(P)H and FADH(2) as the reductant. This reaction is a critical step in DNA biosynthesis. Can also use formaldehyde instead of mTHF as a direct methylene donor for dTMP synthesis. However, the tighter binding of ThyX to mTHF (KD of 4 uM) compared to formaldehyde (KD of 20 mM) confirms that methylene tetrahydrofolate acts as the biological carbon donor for ThyX, serving as a formaldehyde carrier/transporter and thus avoiding genotoxic effects. The sequence is that of Flavin-dependent thymidylate synthase from Thermotoga maritima (strain ATCC 43589 / DSM 3109 / JCM 10099 / NBRC 100826 / MSB8).